The chain runs to 247 residues: 14-3-3 protein zeta (247 aa).

The protein belongs to the 14-3-3 family. As to quaternary structure, homodimer.

The protein localises to the cytoplasm. Functionally, adapter protein implicated in the regulation of a large spectrum of both general and specialized signaling pathways. Binds to a large number of partners, usually by recognition of a phosphoserine or phosphothreonine motif. Binding generally results in the modulation of the activity of the binding partner. The chain is 14-3-3 protein zeta (14-3-3zeta) from Bombyx mori (Silk moth).